The chain runs to 572 residues: Protein misato homolog 1 (572 aa).

Belongs to the misato family.

The protein localises to the mitochondrion outer membrane. Its subcellular location is the cytoplasm. Involved in the regulation of mitochondrial distribution and morphology. Required for mitochondrial fusion and mitochondrial network formation. The sequence is that of Protein misato homolog 1 (MSTO1) from Bos taurus (Bovine).